A 95-amino-acid chain; its full sequence is Pyrimidine/purine nucleoside phosphorylase (95 aa).

It belongs to the nucleoside phosphorylase PpnP family.

The enzyme catalyses a purine D-ribonucleoside + phosphate = a purine nucleobase + alpha-D-ribose 1-phosphate. It catalyses the reaction adenosine + phosphate = alpha-D-ribose 1-phosphate + adenine. It carries out the reaction cytidine + phosphate = cytosine + alpha-D-ribose 1-phosphate. The catalysed reaction is guanosine + phosphate = alpha-D-ribose 1-phosphate + guanine. The enzyme catalyses inosine + phosphate = alpha-D-ribose 1-phosphate + hypoxanthine. It catalyses the reaction thymidine + phosphate = 2-deoxy-alpha-D-ribose 1-phosphate + thymine. It carries out the reaction uridine + phosphate = alpha-D-ribose 1-phosphate + uracil. The catalysed reaction is xanthosine + phosphate = alpha-D-ribose 1-phosphate + xanthine. Functionally, catalyzes the phosphorolysis of diverse nucleosides, yielding D-ribose 1-phosphate and the respective free bases. Can use uridine, adenosine, guanosine, cytidine, thymidine, inosine and xanthosine as substrates. Also catalyzes the reverse reactions. The sequence is that of Pyrimidine/purine nucleoside phosphorylase from Edwardsiella ictaluri (strain 93-146).